Reading from the N-terminus, the 84-residue chain is Conotoxin Tx8.1 (84 aa).

A signal peptide spans 1–19; sequence LKMGAMFVLLLLFTLASSH. Residues 20 to 44 constitute a propeptide that is removed on maturation; it reads REGDIQARKTHLKSDFYRTLPRFAR.

This sequence belongs to the conotoxin S superfamily. In terms of processing, contains 5 disulfide bonds. As to expression, expressed by the venom duct.

Its subcellular location is the secreted. The polypeptide is Conotoxin Tx8.1 (Conus textile (Cloth-of-gold cone)).